The primary structure comprises 422 residues: tRNA hydroxylation protein P (422 aa).

A signal peptide spans 1–58 (MNQVELLSPAGNLKKLKIALNYGADAVYGGVSHFSLRNRAGKEFTLETFKEGIDYAHA).

It belongs to the peptidase U32 family.

In terms of biological role, involved in prephenate-dependent formation of 5-hydroxyuridine (ho5U) modification at position 34 in tRNAs, the first step in 5-carboxymethoxyuridine (cmo5U) biosynthesis. This chain is tRNA hydroxylation protein P, found in Helicobacter pylori (strain ATCC 700392 / 26695) (Campylobacter pylori).